Reading from the N-terminus, the 159-residue chain is UPF0201 protein MK0399 (159 aa).

Belongs to the UPF0201 family.

This is UPF0201 protein MK0399 from Methanopyrus kandleri (strain AV19 / DSM 6324 / JCM 9639 / NBRC 100938).